Consider the following 587-residue polypeptide: Pyruvate decarboxylase 3 (587 aa).

Asp-48 and His-135 together coordinate substrate. The thiamine pyrophosphate binding stretch occupies residues Asp-415–Ile-496. Asp-464, Asn-491, and Gly-493 together coordinate Mg(2+). Glu-497 lines the substrate pocket.

This sequence belongs to the TPP enzyme family. Homotetramer. It depends on a metal cation as a cofactor. Thiamine diphosphate is required as a cofactor.

The catalysed reaction is a 2-oxocarboxylate + H(+) = an aldehyde + CO2. The polypeptide is Pyruvate decarboxylase 3 (PDC3) (Oryza sativa subsp. indica (Rice)).